Reading from the N-terminus, the 215-residue chain is Virulence protein YscR (215 aa).

Helical transmembrane passes span 10–30 (LIGI…GTSF), 53–73 (IALY…TLLA), 156–176 (IGLL…NILL), and 188–208 (ISLP…LTLA).

Belongs to the FliP/MopC/SpaP family.

The protein resides in the cell membrane. The sequence is that of Virulence protein YscR (yscR) from Salmonella typhimurium (strain LT2 / SGSC1412 / ATCC 700720).